A 240-amino-acid chain; its full sequence is Methylthioribulose-1-phosphate dehydratase (240 aa).

Position 100 (Cys100) interacts with substrate. Zn(2+) is bound by residues His117 and His119. The active-site Proton donor/acceptor is the Glu146. His202 is a Zn(2+) binding site.

It belongs to the aldolase class II family. MtnB subfamily. Zn(2+) is required as a cofactor.

It localises to the cytoplasm. The catalysed reaction is 5-(methylsulfanyl)-D-ribulose 1-phosphate = 5-methylsulfanyl-2,3-dioxopentyl phosphate + H2O. The protein operates within amino-acid biosynthesis; L-methionine biosynthesis via salvage pathway; L-methionine from S-methyl-5-thio-alpha-D-ribose 1-phosphate: step 2/6. Functionally, catalyzes the dehydration of methylthioribulose-1-phosphate (MTRu-1-P) into 2,3-diketo-5-methylthiopentyl-1-phosphate (DK-MTP-1-P). This Emericella nidulans (strain FGSC A4 / ATCC 38163 / CBS 112.46 / NRRL 194 / M139) (Aspergillus nidulans) protein is Methylthioribulose-1-phosphate dehydratase.